We begin with the raw amino-acid sequence, 906 residues long: Protein translocase subunit SecA (906 aa).

ATP is bound by residues glutamine 86, 104–108 (GEGKT), and aspartate 499. The tract at residues 862–886 (KPVVSRIDPKDRNPDDPTSWGRVSR) is disordered. Residues cysteine 890, cysteine 892, cysteine 901, and histidine 902 each contribute to the Zn(2+) site.

This sequence belongs to the SecA family. Monomer and homodimer. Part of the essential Sec protein translocation apparatus which comprises SecA, SecYEG and auxiliary proteins SecDF-YajC and YidC. Requires Zn(2+) as cofactor.

The protein localises to the cell inner membrane. It localises to the cytoplasm. It catalyses the reaction ATP + H2O + cellular proteinSide 1 = ADP + phosphate + cellular proteinSide 2.. Part of the Sec protein translocase complex. Interacts with the SecYEG preprotein conducting channel. Has a central role in coupling the hydrolysis of ATP to the transfer of proteins into and across the cell membrane, serving both as a receptor for the preprotein-SecB complex and as an ATP-driven molecular motor driving the stepwise translocation of polypeptide chains across the membrane. This chain is Protein translocase subunit SecA, found in Rickettsia africae (strain ESF-5).